The sequence spans 204 residues: Altered inheritance of mitochondria protein 20 (204 aa).

Residues 6 to 26 form a helical membrane-spanning segment; sequence VAVGTAVGIPIAVGVIIALIF.

It belongs to the SKG1 family.

It is found in the vacuole membrane. Functionally, involved in cell cycle progression and surviving DNA damage. This is Altered inheritance of mitochondria protein 20 (AIM20) from Saccharomyces cerevisiae (strain JAY291) (Baker's yeast).